A 317-amino-acid polypeptide reads, in one-letter code: Glutathione synthetase (317 aa).

Positions 124 to 310 constitute an ATP-grasp domain; that stretch reads EKLFTAWFPE…ITGKLMDAIE (187 aa). Residue 150–207 participates in ATP binding; sequence FRQEHGDIILKPLDGMGGASIFRVKENDPNVSVIIETLTNHGQNYAMAQTFVPDISNG. Mg(2+) is bound by residues Glu281 and Asn283.

It belongs to the prokaryotic GSH synthase family. Mg(2+) is required as a cofactor. It depends on Mn(2+) as a cofactor.

The enzyme catalyses gamma-L-glutamyl-L-cysteine + glycine + ATP = glutathione + ADP + phosphate + H(+). The protein operates within sulfur metabolism; glutathione biosynthesis; glutathione from L-cysteine and L-glutamate: step 2/2. The polypeptide is Glutathione synthetase (Vibrio vulnificus (strain CMCP6)).